The primary structure comprises 327 residues: Tetraacyldisaccharide 4'-kinase (327 aa).

An ATP-binding site is contributed by 54–61 (TTGGTGKT). A disordered region spans residues 78–106 (PHILSRGHGGRERGPIGVNPNRSTPRDVG).

This sequence belongs to the LpxK family.

The enzyme catalyses a lipid A disaccharide + ATP = a lipid IVA + ADP + H(+). It functions in the pathway glycolipid biosynthesis; lipid IV(A) biosynthesis; lipid IV(A) from (3R)-3-hydroxytetradecanoyl-[acyl-carrier-protein] and UDP-N-acetyl-alpha-D-glucosamine: step 6/6. Its function is as follows. Transfers the gamma-phosphate of ATP to the 4'-position of a tetraacyldisaccharide 1-phosphate intermediate (termed DS-1-P) to form tetraacyldisaccharide 1,4'-bis-phosphate (lipid IVA). This chain is Tetraacyldisaccharide 4'-kinase, found in Gluconobacter oxydans (strain 621H) (Gluconobacter suboxydans).